A 1366-amino-acid chain; its full sequence is Protein strawberry notch homolog 2 (1366 aa).

Disordered stretches follow at residues 1 to 24 (MLAV…GSLL), 174 to 217 (QEQS…KQHP), 614 to 640 (STKR…KAPR), and 1324 to 1366 (HAGP…QAPL). Pro residues predominate over residues 15-24 (HEPPPAGSLL). The segment covering 182–194 (PEEEDEAEEEEAE) has biased composition (acidic residues). Basic residues predominate over residues 614–637 (STKRKRDRGAGSKRKRRPRGRGAK). Residues 1333 to 1347 (LGEGAGAGGAAGGGP) are compositionally biased toward gly residues.

This sequence belongs to the SBNO family. Interacts with TAL1; this interaction inhibits TAL1 occupancy of the DCSTAMP promoter, leading to the activation of the DCSTAMP promoter by the transcription factor MITF. Detected in macrophages. IL10 regulates expression in a STAT3-dependent way.

In terms of biological role, acts as a transcriptional coregulator, that can have both coactivator and corepressor functions. Inhibits the DCSTAMP-repressive activity of TAL1, hence enhancing the access of the transcription factor MITF to the DC-STAMP promoter in osteoclast. Plays a role in bone homeostasis; required as a positive regulator in TNFSF11//RANKL-mediated osteoclast fusion via a DCSTAMP-dependent pathway. May also be required in the regulation of osteoblast differentiation. Involved in the transcriptional corepression of NF-kappaB in macrophages. Plays a role as a regulator in the pro-inflammatory cascade. In Homo sapiens (Human), this protein is Protein strawberry notch homolog 2 (SBNO2).